Reading from the N-terminus, the 210-residue chain is Large ribosomal subunit protein uL4 (210 aa).

Positions 44–77 are disordered; it reads ARQGNASSKTRSEVRGGGRKPWRQKGTGRARAGS. Residues 60–71 are compositionally biased toward basic residues; sequence GGRKPWRQKGTG.

It belongs to the universal ribosomal protein uL4 family. In terms of assembly, part of the 50S ribosomal subunit.

Functionally, one of the primary rRNA binding proteins, this protein initially binds near the 5'-end of the 23S rRNA. It is important during the early stages of 50S assembly. It makes multiple contacts with different domains of the 23S rRNA in the assembled 50S subunit and ribosome. Forms part of the polypeptide exit tunnel. This Microcystis aeruginosa (strain NIES-843 / IAM M-2473) protein is Large ribosomal subunit protein uL4.